The following is a 292-amino-acid chain: Mycothiol acetyltransferase (292 aa).

N-acetyltransferase domains follow at residues 13–168 (ALDR…KWLQ) and 159–292 (KSVA…VYEK). Residue Glu40 participates in 1D-myo-inositol 2-(L-cysteinylamino)-2-deoxy-alpha-D-glucopyranoside binding. 77–79 (LAV) contributes to the acetyl-CoA binding site. 1D-myo-inositol 2-(L-cysteinylamino)-2-deoxy-alpha-D-glucopyranoside is bound by residues Glu179, Lys218, and Glu226. Acetyl-CoA-binding positions include 230–232 (VGL) and 237–243 (RGRGLGD). Tyr264 is a 1D-myo-inositol 2-(L-cysteinylamino)-2-deoxy-alpha-D-glucopyranoside binding site.

This sequence belongs to the acetyltransferase family. MshD subfamily. As to quaternary structure, monomer.

It carries out the reaction 1D-myo-inositol 2-(L-cysteinylamino)-2-deoxy-alpha-D-glucopyranoside + acetyl-CoA = mycothiol + CoA + H(+). In terms of biological role, catalyzes the transfer of acetyl from acetyl-CoA to desacetylmycothiol (Cys-GlcN-Ins) to form mycothiol. This Corynebacterium glutamicum (strain R) protein is Mycothiol acetyltransferase.